Consider the following 303-residue polypeptide: tRNA dimethylallyltransferase (303 aa).

12 to 19 (GPTGVGKT) serves as a coordination point for ATP. Substrate is bound at residue 14–19 (TGVGKT). The tract at residues 37 to 40 (DSAQ) is interaction with substrate tRNA.

Belongs to the IPP transferase family. As to quaternary structure, monomer. Mg(2+) is required as a cofactor.

The enzyme catalyses adenosine(37) in tRNA + dimethylallyl diphosphate = N(6)-dimethylallyladenosine(37) in tRNA + diphosphate. Its function is as follows. Catalyzes the transfer of a dimethylallyl group onto the adenine at position 37 in tRNAs that read codons beginning with uridine, leading to the formation of N6-(dimethylallyl)adenosine (i(6)A). In Fusobacterium nucleatum subsp. nucleatum (strain ATCC 25586 / DSM 15643 / BCRC 10681 / CIP 101130 / JCM 8532 / KCTC 2640 / LMG 13131 / VPI 4355), this protein is tRNA dimethylallyltransferase.